The sequence spans 459 residues: Cysteine--tRNA ligase (459 aa).

Cys-27 is a binding site for Zn(2+). Residues 29–39 (PTVYNFVHIGN) carry the 'HIGH' region motif. The Zn(2+) site is built by Cys-211, His-236, and Glu-240. A 'KMSKS' region motif is present at residues 269-273 (KMSKS). Lys-272 lines the ATP pocket.

The protein belongs to the class-I aminoacyl-tRNA synthetase family. As to quaternary structure, monomer. Requires Zn(2+) as cofactor.

The protein resides in the cytoplasm. The enzyme catalyses tRNA(Cys) + L-cysteine + ATP = L-cysteinyl-tRNA(Cys) + AMP + diphosphate. The polypeptide is Cysteine--tRNA ligase (Ehrlichia canis (strain Jake)).